We begin with the raw amino-acid sequence, 49 residues long: SPbeta prophage-derived uncharacterized protein YoqT (49 aa).

A helical membrane pass occupies residues 7–29 (CFVNWSFDKIMDYILIAGLYFVF).

It is found in the cell membrane. The chain is SPbeta prophage-derived uncharacterized protein YoqT (yoqT) from Bacillus subtilis (strain 168).